Here is a 136-residue protein sequence, read N- to C-terminus: Aspartate 1-decarboxylase (136 aa).

The Schiff-base intermediate with substrate; via pyruvic acid role is filled by serine 25. Serine 25 is modified (pyruvic acid (Ser)). Threonine 57 lines the substrate pocket. Tyrosine 58 acts as the Proton donor in catalysis. 73–75 contributes to the substrate binding site; that stretch reads GAA.

This sequence belongs to the PanD family. Heterooctamer of four alpha and four beta subunits. Pyruvate is required as a cofactor. Post-translationally, is synthesized initially as an inactive proenzyme, which is activated by self-cleavage at a specific serine bond to produce a beta-subunit with a hydroxyl group at its C-terminus and an alpha-subunit with a pyruvoyl group at its N-terminus.

The protein localises to the cytoplasm. The enzyme catalyses L-aspartate + H(+) = beta-alanine + CO2. It functions in the pathway cofactor biosynthesis; (R)-pantothenate biosynthesis; beta-alanine from L-aspartate: step 1/1. In terms of biological role, catalyzes the pyruvoyl-dependent decarboxylation of aspartate to produce beta-alanine. The chain is Aspartate 1-decarboxylase from Mycolicibacterium smegmatis (strain ATCC 700084 / mc(2)155) (Mycobacterium smegmatis).